The following is a 638-amino-acid chain: Probable inactive receptor kinase At4g23740 (638 aa).

The first 24 residues, 1 to 24 (MEALRIYLWSLCLSLCLIIYGANS), serve as a signal peptide directing secretion. 5 LRR repeats span residues 94–117 (ALRVLSLRSNLISGEFPKDFVELK), 118–139 (DLAFLYLQDNNLSGPLPLDFSV), 142–165 (NLTSVNLSNNGFNGTIPSSLSRLK), 166–188 (RIQSLNLANNTLSGDIPDLSVLS), and 189–198 (SLQHIDLSNN). Residues 257–277 (VFLLIVIAVSIVVITALAFVL) traverse the membrane as a helical segment. Positions 337–608 (RASAEVLGKG…SDLVRLIENV (272 aa)) constitute a Protein kinase domain. The residue at position 339 (Ser339) is a Phosphoserine. Residue 343–351 (LGKGTFGTT) coordinates ATP. Thr360 carries the post-translational modification Phosphothreonine. Residue Lys365 participates in ATP binding. Residues Ser416 and Ser419 each carry the phosphoserine modification. A phosphothreonine mark is found at Thr436 and Thr509. A Phosphoserine modification is found at Ser513. The tract at residues 612–638 (RTSIEPEPELKPKSENGASETSTPSEI) is disordered. Residues 613 to 625 (TSIEPEPELKPKS) show a composition bias toward basic and acidic residues. Positions 627 to 638 (NGASETSTPSEI) are enriched in polar residues.

The protein belongs to the protein kinase superfamily.

Its subcellular location is the membrane. This is Probable inactive receptor kinase At4g23740 from Arabidopsis thaliana (Mouse-ear cress).